Reading from the N-terminus, the 248-residue chain is Pyridoxine 5'-phosphate synthase (248 aa).

Residue Asn-12 coordinates 3-amino-2-oxopropyl phosphate. 1-deoxy-D-xylulose 5-phosphate is bound at residue 14–15 (DH). Arg-23 serves as a coordination point for 3-amino-2-oxopropyl phosphate. The active-site Proton acceptor is the His-48. 1-deoxy-D-xylulose 5-phosphate is bound by residues Arg-50 and His-55. The active-site Proton acceptor is Glu-75. Thr-105 is a binding site for 1-deoxy-D-xylulose 5-phosphate. His-199 (proton donor) is an active-site residue. Residues Gly-200 and 221–222 (GH) contribute to the 3-amino-2-oxopropyl phosphate site.

The protein belongs to the PNP synthase family. Homooctamer; tetramer of dimers.

The protein resides in the cytoplasm. The enzyme catalyses 3-amino-2-oxopropyl phosphate + 1-deoxy-D-xylulose 5-phosphate = pyridoxine 5'-phosphate + phosphate + 2 H2O + H(+). Its pathway is cofactor biosynthesis; pyridoxine 5'-phosphate biosynthesis; pyridoxine 5'-phosphate from D-erythrose 4-phosphate: step 5/5. In terms of biological role, catalyzes the complicated ring closure reaction between the two acyclic compounds 1-deoxy-D-xylulose-5-phosphate (DXP) and 3-amino-2-oxopropyl phosphate (1-amino-acetone-3-phosphate or AAP) to form pyridoxine 5'-phosphate (PNP) and inorganic phosphate. The sequence is that of Pyridoxine 5'-phosphate synthase from Jannaschia sp. (strain CCS1).